Consider the following 20-residue polypeptide: Trypsin inhibitor (20 aa).

The disordered stretch occupies residues 1 to 20 (APSDTTIAETLTITEEFFPD).

As to expression, hemolymph.

The protein resides in the secreted. It localises to the extracellular space. Its function is as follows. Inhibits trypsin stoichiometrically. Also inhibits chymotrypsin very weakly. This chain is Trypsin inhibitor, found in Mythimna unipuncta (Armyworm moth).